We begin with the raw amino-acid sequence, 151 residues long: Protein archease-like (151 aa).

Residues Asp20, Asp150, and Ile151 each coordinate Ca(2+).

The protein belongs to the archease family.

Functionally, component of the tRNA-splicing ligase complex required to facilitate the enzymatic turnover of catalytic subunit RtcB. The sequence is that of Protein archease-like from Dictyostelium discoideum (Social amoeba).